The primary structure comprises 206 residues: MASGKFITFEGIDGAGKTTHLQWFCERLQGRLAAAGRQVVVTREPGGTQLGEKLREILLNQPMDLETEALLMFAARREHLALVIEPALARGDWVVSDRFTDATFAYQGGGRGLPRDKLETLERWVQGGFQPDLTVLFDVAPQVASERRGAVRMPDKFESESDAFFSRTRAEYLRRAEEAPHRFAIVDATRSIPEIRQQLERVLAAL.

11-18 (GIDGAGKT) contacts ATP.

The protein belongs to the thymidylate kinase family.

It carries out the reaction dTMP + ATP = dTDP + ADP. Its function is as follows. Phosphorylation of dTMP to form dTDP in both de novo and salvage pathways of dTTP synthesis. In Burkholderia cenocepacia (strain HI2424), this protein is Thymidylate kinase.